A 201-amino-acid chain; its full sequence is 3-isopropylmalate dehydratase small subunit (201 aa).

It belongs to the LeuD family. LeuD type 1 subfamily. As to quaternary structure, heterodimer of LeuC and LeuD.

It carries out the reaction (2R,3S)-3-isopropylmalate = (2S)-2-isopropylmalate. The protein operates within amino-acid biosynthesis; L-leucine biosynthesis; L-leucine from 3-methyl-2-oxobutanoate: step 2/4. Functionally, catalyzes the isomerization between 2-isopropylmalate and 3-isopropylmalate, via the formation of 2-isopropylmaleate. The polypeptide is 3-isopropylmalate dehydratase small subunit (Rhodopseudomonas palustris (strain BisB18)).